The sequence spans 923 residues: Mitochondrial 10-formyltetrahydrofolate dehydrogenase (923 aa).

The N-terminal 19 residues, 1 to 19 (MLWRGSQALRHFSTSRVYF), are a transit peptide targeting the mitochondrion; not cleaved. A hydrolase domain region spans residues 23–331 (LKLALIGQSL…PASQYFSAGE (309 aa)). At Ser-31 the chain carries Phosphoserine. Lys-60 is subject to N6-succinyllysine. 110–112 (QFI) serves as a coordination point for (6R)-10-formyltetrahydrofolate. The active-site Proton donor is the His-128. Residue Asp-164 coordinates (6R)-10-formyltetrahydrofolate. In terms of domain architecture, Carrier spans 339-416 (AEELKVAETI…DFIQKVVRRL (78 aa)). Ser-375 carries the post-translational modification O-(pantetheine 4'-phosphoryl)serine. Residues 438-923 (TVKIPYQCFI…LKIKTVTLEY (486 aa)) are aldehyde dehydrogenase domain. NADP(+) contacts are provided by residues 592 to 594 (IPW) and 618 to 621 (KPAQ). Position 650 is a phosphoserine (Ser-650). NADP(+) is bound by residues 651–656 (GGVAGQ) and 671–672 (GS). Position 681 is an N6-succinyllysine (Lys-681). Residue Glu-694 is the Proton acceptor of the active site. NADP(+) is bound at residue 694 to 695 (EL). The active-site Proton donor is the Cys-728. NADP(+)-binding positions include Lys-778 and 825 to 827 (ESF). Lys-903 is modified (N6-acetyllysine).

In the N-terminal section; belongs to the GART family. This sequence in the C-terminal section; belongs to the aldehyde dehydrogenase family. ALDH1L subfamily. Post-translationally, phosphopantetheinylation at Ser-375 by AASDHPPT is required for the formyltetrahydrofolate dehydrogenase activity.

The protein localises to the mitochondrion. It catalyses the reaction (6R)-10-formyltetrahydrofolate + NADP(+) + H2O = (6S)-5,6,7,8-tetrahydrofolate + CO2 + NADPH + H(+). Its function is as follows. Mitochondrial 10-formyltetrahydrofolate dehydrogenase that catalyzes the NADP(+)-dependent conversion of 10-formyltetrahydrofolate to tetrahydrofolate and carbon dioxide. The sequence is that of Mitochondrial 10-formyltetrahydrofolate dehydrogenase from Mus musculus (Mouse).